The chain runs to 206 residues: Charged multivesicular body protein 2a homolog 1 (206 aa).

The interval 1–32 (MSFFGGNKKTPEQELKDSKRELSKGQREMDRE) is disordered. A compositionally biased stretch (basic and acidic residues) spans 9–32 (KTPEQELKDSKRELSKGQREMDRE). Coiled-coil stretches lie at residues 12–80 (EQEL…RATK) and 114–148 (NKQTDLVQLQKTMMEYEKQTQRVEMTEEMMQDMFE).

The protein belongs to the SNF7 family. As to quaternary structure, probable core component of the endosomal sorting required for transport complex III (ESCRT-III). ESCRT-III components are thought to multimerize to form a flat lattice on the perimeter membrane of the endosome.

It localises to the endosome membrane. Functionally, probable core component of the endosomal sorting required for transport complex III (ESCRT-III) which is involved in multivesicular bodies (MVBs) formation and sorting of endosomal cargo proteins into MVBs. MVBs contain intraluminal vesicles (ILVs) that are generated by invagination and scission from the limiting membrane of the endosome and are delivered to lysosomes enabling degradation of membrane proteins. This chain is Charged multivesicular body protein 2a homolog 1 (chmp2a1), found in Dictyostelium discoideum (Social amoeba).